The chain runs to 124 residues: Large ribosomal subunit protein bL12 (124 aa).

This sequence belongs to the bacterial ribosomal protein bL12 family. As to quaternary structure, homodimer. Part of the ribosomal stalk of the 50S ribosomal subunit. Forms a multimeric L10(L12)X complex, where L10 forms an elongated spine to which 2 to 4 L12 dimers bind in a sequential fashion. Binds GTP-bound translation factors.

Functionally, forms part of the ribosomal stalk which helps the ribosome interact with GTP-bound translation factors. Is thus essential for accurate translation. This chain is Large ribosomal subunit protein bL12, found in Cupriavidus taiwanensis (strain DSM 17343 / BCRC 17206 / CCUG 44338 / CIP 107171 / LMG 19424 / R1) (Ralstonia taiwanensis (strain LMG 19424)).